Consider the following 203-residue polypeptide: Outer-membrane lipoprotein carrier protein (203 aa).

Residues 1 to 21 (MKKQLMTSCLFAAVLAAPAFA) form the signal peptide.

It belongs to the LolA family. In terms of assembly, monomer.

It localises to the periplasm. Its function is as follows. Participates in the translocation of lipoproteins from the inner membrane to the outer membrane. Only forms a complex with a lipoprotein if the residue after the N-terminal Cys is not an aspartate (The Asp acts as a targeting signal to indicate that the lipoprotein should stay in the inner membrane). This Sodalis glossinidius (strain morsitans) protein is Outer-membrane lipoprotein carrier protein.